A 730-amino-acid polypeptide reads, in one-letter code: Guanyl-specific ribonuclease pgl-1 (730 aa).

Residues Lys205–Lys447 are involved in dimerization. The active-site Proton acceptor is the His437. 2 stretches are compositionally biased toward polar residues: residues Asp452–Ala472 and Asp568–Lys595. Disordered stretches follow at residues Asp452–Lys475, Ser567–Pro639, and Gly686–Phe730. The segment at Gly674–Phe730 is RNA-binding RGG-box.

Homodimer. Interacts with pgl-2 and pgl-3; this association is not required for P-granule localization of either pgl-2 or pgl-3. Interacts with ife-1. Interacts with prmt-1; the interaction is direct. Interacts with nmad-1. Interacts with P granule components meg-1, meg-3 and meg-4. It depends on Does not require metal ions for catalytic activity. as a cofactor. In terms of processing, methylated at arginine residues in the RNA-binding RGG-box by prmt-1. Methylation promotes P-granule degradation by autophagy. In terms of tissue distribution, expressed in the germline. Expressed in most somatic cells.

The protein localises to the cytoplasmic granule. It carries out the reaction [RNA] containing guanosine + H2O = an [RNA fragment]-3'-guanosine-3'-phosphate + a 5'-hydroxy-ribonucleotide-3'-[RNA fragment].. Its activity is regulated as follows. Not inhibited by RNase inhibitor RNasin. Functionally, guanyl-specific endoribonuclease which cleaves the phosphodiester bond in single-stranded RNA between the 3'-guanylic residue and the 5'-OH residue of adjacent nucleotide, resulting in the formation of a corresponding 2',3'-cyclic phosphate intermediate. Together with the P-granule component pgl-3, is involved in the formation of P-granules. Together with pgl-3, probably recruits other granule components such as pos-1, mex-3 and glh-1 to P-granules. In addition, may act redundantly with pgl-3 to protect germ cells from excessive germline apoptosis during normal oogenesis and development of the two gonadal arms. This may in part be through regulating the localization of sir-2.1 which is involved in germ cell apoptosis. May protect somatic cells from excessive apoptosis during normal development. Essential role in male and female postembryonic germline development; maternally provided protein maintains a population of proliferating germ cells and zygotic expression is required for correct oogenesis. This chain is Guanyl-specific ribonuclease pgl-1, found in Caenorhabditis elegans.